The sequence spans 443 residues: Xaa-Pro dipeptidase (443 aa).

The Mn(2+) site is built by aspartate 246, aspartate 257, histidine 339, glutamate 384, and glutamate 423.

The protein belongs to the peptidase M24B family. Bacterial-type prolidase subfamily. Mn(2+) is required as a cofactor.

The enzyme catalyses Xaa-L-Pro dipeptide + H2O = an L-alpha-amino acid + L-proline. Its function is as follows. Splits dipeptides with a prolyl residue in the C-terminal position. The polypeptide is Xaa-Pro dipeptidase (Pectobacterium atrosepticum (strain SCRI 1043 / ATCC BAA-672) (Erwinia carotovora subsp. atroseptica)).